Consider the following 320-residue polypeptide: Heterogeneous nuclear ribonucleoprotein A1-like 2 (320 aa).

Residues 4-94 (SASPKEPEQL…EPKRAVSRED (91 aa)) form a globular A domain region. 2 positions are modified to phosphoserine: serine 6 and serine 22. RRM domains lie at 14–97 (RKLF…DSQR) and 105–184 (KKIF…LPKQ). Residues 95–185 (SQRPGAHLTV…EVRKALPKQE (91 aa)) form a globular B domain region. Residues 181-216 (LPKQEMASASSSQRGRRGSGNFGGGRGDGFGGNDNF) form a disordered region. Asymmetric dimethylarginine; alternate occurs at positions 194, 206, 218, and 225. An omega-N-methylarginine; alternate mark is found at arginine 194, arginine 206, arginine 218, and arginine 225. Residues 198–216 (GSGNFGGGRGDGFGGNDNF) show a composition bias toward gly residues. The RNA-binding RGG-box stretch occupies residues 218-240 (RGGNFSGRGGFGGSCGGGGYGGS). Residues 268–305 (NQSSNFGPMKGGNFGGRSSGPYGGGGQYFAKPQNQGGY) form a nuclear targeting sequence region. Residues 271 to 320 (SNFGPMKGGNFGGRSSGPYGGGGQYFAKPQNQGGYGVSSSSSSYGSGRRF) are disordered. A compositionally biased stretch (gly residues) spans 276-294 (MKGGNFGGRSSGPYGGGGQ). An Omega-N-methylarginine modification is found at arginine 284. Lysine 298 is modified (N6-acetyllysine). Positions 307–320 (VSSSSSSYGSGRRF) are enriched in low complexity.

It is found in the nucleus. The protein resides in the cytoplasm. Functionally, involved in the packaging of pre-mRNA into hnRNP particles, transport of poly(A) mRNA from the nucleus to the cytoplasm and may modulate splice site selection. The polypeptide is Heterogeneous nuclear ribonucleoprotein A1-like 2 (HNRNPA1L2) (Homo sapiens (Human)).